The sequence spans 204 residues: UPF0637 protein SAR1080 (204 aa).

It belongs to the UPF0637 family.

The protein is UPF0637 protein SAR1080 of Staphylococcus aureus (strain MRSA252).